Consider the following 440-residue polypeptide: (S)-N-methylcoclaurine 3'-hydroxylase-like protein (440 aa).

The chain crosses the membrane as a helical; Signal-anchor for type II membrane protein span at residues 2-21; that stretch reads EIVTVALIAIVFTTFLYLIV. C430 is a heme binding site.

Belongs to the cytochrome P450 family. Heme is required as a cofactor.

It is found in the membrane. In terms of biological role, involved in the biosynthesis of benzylisoquinoline alkaloids. Probably involved in papaverine biosynthesis since its transcripts are abundant only in cultivars with substantial papaverine accumulation. May catalyze the 3'-hydroxylation of (S)-coclaurine. This Papaver somniferum (Opium poppy) protein is (S)-N-methylcoclaurine 3'-hydroxylase-like protein.